The following is a 133-amino-acid chain: Cytidine deaminase (133 aa).

Residues 3-131 (VDLDWVHHKL…EILKGGFRSY (129 aa)) enclose the CMP/dCMP-type deaminase domain. A substrate-binding site is contributed by 43–45 (NIE). Cys-54 contributes to the Zn(2+) binding site. Glu-56 (proton donor) is an active-site residue. Zn(2+) contacts are provided by Cys-89 and Cys-92.

Belongs to the cytidine and deoxycytidylate deaminase family. In terms of assembly, homodimer. Zn(2+) serves as cofactor.

The catalysed reaction is cytidine + H2O + H(+) = uridine + NH4(+). The enzyme catalyses 2'-deoxycytidine + H2O + H(+) = 2'-deoxyuridine + NH4(+). Functionally, this enzyme scavenges exogenous and endogenous cytidine and 2'-deoxycytidine for UMP synthesis. The protein is Cytidine deaminase (cdd) of Mycoplasma pneumoniae (strain ATCC 29342 / M129 / Subtype 1) (Mycoplasmoides pneumoniae).